The sequence spans 335 residues: Glycerol-3-phosphate dehydrogenase [NAD(P)+] (335 aa).

The NADPH site is built by S12, W13, and K107. Residues K107, G138, and S140 each coordinate sn-glycerol 3-phosphate. A142 provides a ligand contact to NADPH. K193, D246, S256, R257, and N258 together coordinate sn-glycerol 3-phosphate. The active-site Proton acceptor is the K193. Residue R257 participates in NADPH binding. 2 residues coordinate NADPH: V281 and E283.

Belongs to the NAD-dependent glycerol-3-phosphate dehydrogenase family.

The protein resides in the cytoplasm. The catalysed reaction is sn-glycerol 3-phosphate + NAD(+) = dihydroxyacetone phosphate + NADH + H(+). It carries out the reaction sn-glycerol 3-phosphate + NADP(+) = dihydroxyacetone phosphate + NADPH + H(+). Its pathway is membrane lipid metabolism; glycerophospholipid metabolism. Catalyzes the reduction of the glycolytic intermediate dihydroxyacetone phosphate (DHAP) to sn-glycerol 3-phosphate (G3P), the key precursor for phospholipid synthesis. This Citrifermentans bemidjiense (strain ATCC BAA-1014 / DSM 16622 / JCM 12645 / Bem) (Geobacter bemidjiensis) protein is Glycerol-3-phosphate dehydrogenase [NAD(P)+].